A 104-amino-acid polypeptide reads, in one-letter code: Large ribosomal subunit protein uL24 (104 aa).

This sequence belongs to the universal ribosomal protein uL24 family. In terms of assembly, part of the 50S ribosomal subunit.

In terms of biological role, one of two assembly initiator proteins, it binds directly to the 5'-end of the 23S rRNA, where it nucleates assembly of the 50S subunit. Functionally, one of the proteins that surrounds the polypeptide exit tunnel on the outside of the subunit. The protein is Large ribosomal subunit protein uL24 of Shewanella halifaxensis (strain HAW-EB4).